We begin with the raw amino-acid sequence, 324 residues long: D-alanine--D-alanine ligase (324 aa).

Residues 121–321 (NQYLKAFGVR…IKDVMTDIIE (201 aa)) enclose the ATP-grasp domain. 149–204 (VEKIGLPCFIKPNLGGSSFGVTKVKTREQIQPAIAKAFSEAEEVMIEAFMGGTELT) serves as a coordination point for ATP. Mg(2+) contacts are provided by Asp275, Glu288, and Asn290.

This sequence belongs to the D-alanine--D-alanine ligase family. Mg(2+) is required as a cofactor. Mn(2+) serves as cofactor.

The protein localises to the cytoplasm. It catalyses the reaction 2 D-alanine + ATP = D-alanyl-D-alanine + ADP + phosphate + H(+). It participates in cell wall biogenesis; peptidoglycan biosynthesis. Functionally, cell wall formation. The sequence is that of D-alanine--D-alanine ligase from Bacteroides fragilis (strain YCH46).